The sequence spans 142 residues: Conidial pigment biosynthesis dehydratase EthD (142 aa).

Residues 25–121 (PGMSEAAYRE…PDHQKFADTS (97 aa)) enclose the EthD domain.

It belongs to the tpcK family.

The protein operates within pigment biosynthesis. Functionally, dehydratase; part of the Pks1 gene cluster that mediates the biosynthesis of an anthraquinone derivative pigment that contributes to conidial pigmentation that provides protection from UV radiation, heat and cold stress. The polyketide synthase Pks1 produces 1-acetyl-2,4,6,8-tetrahydroxy-9,10-anthraquinone though condensation of acetyl-CoA with malonyl-CoA. The dehydratase EthD and the laccase Mlac1 further convert the anthraquinone derivative into the final conidial pigment. The protein is Conidial pigment biosynthesis dehydratase EthD of Metarhizium robertsii (strain ARSEF 23 / ATCC MYA-3075) (Metarhizium anisopliae (strain ARSEF 23)).